A 499-amino-acid polypeptide reads, in one-letter code: Serine/threonine-protein kinase RHS3 (499 aa).

Residues 1-92 form a disordered region; the sequence is MLLKPGNKLV…NSSKPHTGGD (92 aa). Residues 39 to 55 are compositionally biased toward basic and acidic residues; that stretch reads QKQVEQNTKKIEEHQIK. The segment covering 63–85 has biased composition (low complexity); it reads SNHNVNMSSQSNNSESTSTNNSS. A Protein kinase domain is found at 113–436; sequence FRVLKRLGYG…ATEIKQHPFF (324 aa). ATP-binding positions include 119-127 and Lys144; that span reads LGYGDIGSV. The active-site Proton acceptor is the Asp240. Residues 437 to 499 enclose the AGC-kinase C-terminal domain; the sequence is EGVNWALIRG…DPDYIVFEYF (63 aa).

It belongs to the protein kinase superfamily. AGC Ser/Thr protein kinase family. Interacts with PDPK1/PDK1. In terms of processing, autophosphorylated and phosphorylated by PDPK1/PDK1. In terms of tissue distribution, specifically expressed in root hair cells.

The catalysed reaction is L-seryl-[protein] + ATP = O-phospho-L-seryl-[protein] + ADP + H(+). The enzyme catalyses L-threonyl-[protein] + ATP = O-phospho-L-threonyl-[protein] + ADP + H(+). Activated by PDPK1/PDK1. Its function is as follows. Involved in root hair growth and morphogenesis. The protein is Serine/threonine-protein kinase RHS3 of Arabidopsis thaliana (Mouse-ear cress).